A 383-amino-acid polypeptide reads, in one-letter code: ATP phosphoribosyltransferase regulatory subunit (383 aa).

Belongs to the class-II aminoacyl-tRNA synthetase family. HisZ subfamily. As to quaternary structure, heteromultimer composed of HisG and HisZ subunits.

It localises to the cytoplasm. It functions in the pathway amino-acid biosynthesis; L-histidine biosynthesis; L-histidine from 5-phospho-alpha-D-ribose 1-diphosphate: step 1/9. Functionally, required for the first step of histidine biosynthesis. May allow the feedback regulation of ATP phosphoribosyltransferase activity by histidine. The sequence is that of ATP phosphoribosyltransferase regulatory subunit from Neisseria gonorrhoeae (strain NCCP11945).